The sequence spans 858 residues: Heat shock protein 105 kDa (858 aa).

At Ser2 the chain carries N-acetylserine. Lys471 carries the N6-acetyllysine modification. Disordered regions lie at residues 500 to 585 (KVPT…PPEA) and 801 to 858 (VTQP…MDLD). Acidic residues predominate over residues 504-515 (EEEDGSSVEADM). Phosphoserine is present on residues Ser509 and Ser510. A compositionally biased stretch (polar residues) spans 533 to 555 (QQDNSEAGTQPQVQTDGQQTSQS). Ser558 carries the post-translational modification Phosphoserine. Thr562 is modified (phosphothreonine). 2 stretches are compositionally biased toward basic and acidic residues: residues 564–585 (EENK…PPEA) and 806–815 (PKIESPKLER). Ser810 bears the Phosphoserine mark. Thr816 is modified (phosphothreonine).

Belongs to the heat shock protein 70 family. As to quaternary structure, interacts with HSPA8/HSC70. Interacts with HSPA1A (via NBD) and HSPA1B (via NBD). In terms of processing, phosphorylation on Ser-509 may be important for regulation of the HSPA8/HSC70 chaperone activity.

Its subcellular location is the cytoplasm. Acts as a nucleotide-exchange factor (NEF) for chaperone proteins HSPA1A and HSPA1B, promoting the release of ADP from HSPA1A/B thereby triggering substrate release. Prevents the aggregation of denatured proteins in cells under severe stress, on which the ATP levels decrease markedly. Inhibits HSPA8/HSC70 ATPase and chaperone activities. The sequence is that of Heat shock protein 105 kDa (Hsph1) from Rattus norvegicus (Rat).